Consider the following 157-residue polypeptide: Glutathione peroxidase (157 aa).

Cysteine 35 is a catalytic residue.

The protein belongs to the glutathione peroxidase family.

The enzyme catalyses 2 glutathione + H2O2 = glutathione disulfide + 2 H2O. In Lactococcus lactis subsp. cremoris (strain MG1363), this protein is Glutathione peroxidase (gpo).